Here is a 126-residue protein sequence, read N- to C-terminus: Fluoride-specific ion channel FluC (126 aa).

Helical transmembrane passes span 33–53, 64–84, and 96–116; these read LPLN…VFIV, YSLF…SFAL, and GALA…LIGG. 2 residues coordinate Na(+): Gly74 and Thr77.

It belongs to the fluoride channel Fluc/FEX (TC 1.A.43) family.

The protein resides in the cell membrane. It carries out the reaction fluoride(in) = fluoride(out). With respect to regulation, na(+) is not transported, but it plays an essential structural role and its presence is essential for fluoride channel function. Its function is as follows. Fluoride-specific ion channel. Important for reducing fluoride concentration in the cell, thus reducing its toxicity. This is Fluoride-specific ion channel FluC from Nitrosopumilus maritimus (strain SCM1).